Consider the following 365-residue polypeptide: Carbamoyl phosphate synthase small chain (365 aa).

CPSase stretches follow at residues Met1–Gly166 and Met1–His169. Positions 45, 218, and 220 each coordinate L-glutamine. The Glutamine amidotransferase type-1 domain maps to Arg170–Glu357. Cys245 (nucleophile) is an active-site residue. Positions 246, 249, 287, 289, and 290 each coordinate L-glutamine. Residues His330 and Glu332 contribute to the active site.

The protein belongs to the CarA family. In terms of assembly, composed of two chains; the small (or glutamine) chain promotes the hydrolysis of glutamine to ammonia, which is used by the large (or ammonia) chain to synthesize carbamoyl phosphate. Tetramer of heterodimers (alpha,beta)4.

It carries out the reaction hydrogencarbonate + L-glutamine + 2 ATP + H2O = carbamoyl phosphate + L-glutamate + 2 ADP + phosphate + 2 H(+). The enzyme catalyses L-glutamine + H2O = L-glutamate + NH4(+). The protein operates within amino-acid biosynthesis; L-arginine biosynthesis; carbamoyl phosphate from bicarbonate: step 1/1. Its pathway is pyrimidine metabolism; UMP biosynthesis via de novo pathway; (S)-dihydroorotate from bicarbonate: step 1/3. Functionally, small subunit of the glutamine-dependent carbamoyl phosphate synthetase (CPSase). CPSase catalyzes the formation of carbamoyl phosphate from the ammonia moiety of glutamine, carbonate, and phosphate donated by ATP, constituting the first step of 2 biosynthetic pathways, one leading to arginine and/or urea and the other to pyrimidine nucleotides. The small subunit (glutamine amidotransferase) binds and cleaves glutamine to supply the large subunit with the substrate ammonia. In Bacillus cereus (strain ZK / E33L), this protein is Carbamoyl phosphate synthase small chain.